Here is a 366-residue protein sequence, read N- to C-terminus: MTTAQKQWAAEGGLRWDGRMLAGAGLLAGCAGVAMIAGATAWAGHLGLSALTLAILLGMAIGHVPGHQRWLTAGTIQFARHTLLRAGVVLYGARLTLAQVHDLGASGVVIPLLVLAATMLSGAWVGTRVFGLSRSQAVLVAAGSAVCGAAAVLAVAPAVKASPRETAVAIASVVLFGTAGIFLYPWLYALAMHAGVAVAPAHFGVYIGSTLHEVAQVIAAARPLGDDAANAAVVSKMVRVLALAPLLVVLACTMPAEGLVLEAGSGEGALRRATGHAWRAMPWFAAGLLGVALLNSGGAIPATWHAPIDAIDTGMLACAMFAIGTQTHVPMLLKSGVRPLLCAGVLWVGLVAGGAAINAGVRWLAG.

The next 8 membrane-spanning stretches (helical) occupy residues 21–43 (LAGAGLLAGCAGVAMIAGATAWA), 103–125 (LGASGVVIPLLVLAATMLSGAWV), 137–159 (AVLVAAGSAVCGAAAVLAVAPAV), 169–191 (AIASVVLFGTAGIFLYPWLYALA), 198–220 (VAPAHFGVYIGSTLHEVAQVIAA), 240–262 (VLALAPLLVVLACTMPAEGLVLE), 283–305 (WFAAGLLGVALLNSGGAIPATWH), and 343–365 (AGVLWVGLVAGGAAINAGVRWLA).

It belongs to the UPF0324 family.

It is found in the cell membrane. This Ralstonia nicotianae (strain ATCC BAA-1114 / GMI1000) (Ralstonia solanacearum) protein is UPF0324 membrane protein RSc1111.